A 459-amino-acid polypeptide reads, in one-letter code: Ribulose bisphosphate carboxylase large chain (459 aa).

At lysine 4 the chain carries N6,N6,N6-trimethyllysine. Substrate-binding residues include asparagine 113 and threonine 163. Catalysis depends on lysine 165, which acts as the Proton acceptor. A substrate-binding site is contributed by lysine 167. Mg(2+)-binding residues include lysine 191, aspartate 193, and glutamate 194. At lysine 191 the chain carries N6-carboxylysine. The Proton acceptor role is filled by histidine 284. Residues arginine 285, histidine 317, and serine 369 each contribute to the substrate site.

The protein belongs to the RuBisCO large chain family. Type I subfamily. In terms of assembly, heterohexadecamer of 8 large chains and 8 small chains; disulfide-linked. The disulfide link is formed within the large subunit homodimers. Requires Mg(2+) as cofactor. The disulfide bond which can form in the large chain dimeric partners within the hexadecamer appears to be associated with oxidative stress and protein turnover.

The protein resides in the plastid. It localises to the chloroplast. The catalysed reaction is 2 (2R)-3-phosphoglycerate + 2 H(+) = D-ribulose 1,5-bisphosphate + CO2 + H2O. It carries out the reaction D-ribulose 1,5-bisphosphate + O2 = 2-phosphoglycolate + (2R)-3-phosphoglycerate + 2 H(+). In terms of biological role, ruBisCO catalyzes two reactions: the carboxylation of D-ribulose 1,5-bisphosphate, the primary event in carbon dioxide fixation, as well as the oxidative fragmentation of the pentose substrate in the photorespiration process. Both reactions occur simultaneously and in competition at the same active site. The chain is Ribulose bisphosphate carboxylase large chain from Nypa fruticans (Nypa palm).